Reading from the N-terminus, the 158-residue chain is MGVFTFEDESTSTIAPARLYKALVKDADAIIPKAVEAIQSIETVEGNGGPGTIKKLTLIEGGETKYVLHKIEAVDEANLGYNYSIVGGVGLPDTIEKISFETKLVEGANGGSIGKVTIKIETKGDAQPNEEEGKAAKARGDAFFKAIENYLSAHPEYN.

Asp8 contributes to the trans-zeatin binding site. Residues Pro32, Val35, and Ile38 each contribute to the Ca(2+) site. Trans-zeatin is bound by residues Glu60, His69, Tyr81, and Tyr83.

The protein belongs to the BetVI family.

It localises to the cytoplasm. It is found in the cytosol. Class II ribonuclease (RNase). Binds to cytokinins. Interacts with melatonin. The polypeptide is Class 10 plant pathogenesis-related protein 2D (Lupinus luteus (European yellow lupine)).